The primary structure comprises 424 residues: Serine--tRNA ligase (424 aa).

231 to 233 (TAE) provides a ligand contact to L-serine. An ATP-binding site is contributed by 262 to 264 (RSE). Glu-285 serves as a coordination point for L-serine. Position 349-352 (349-352 (EISS)) interacts with ATP. Position 385 (Ser-385) interacts with L-serine.

The protein belongs to the class-II aminoacyl-tRNA synthetase family. Type-1 seryl-tRNA synthetase subfamily. Homodimer. The tRNA molecule binds across the dimer.

It is found in the cytoplasm. The catalysed reaction is tRNA(Ser) + L-serine + ATP = L-seryl-tRNA(Ser) + AMP + diphosphate + H(+). It carries out the reaction tRNA(Sec) + L-serine + ATP = L-seryl-tRNA(Sec) + AMP + diphosphate + H(+). The protein operates within aminoacyl-tRNA biosynthesis; selenocysteinyl-tRNA(Sec) biosynthesis; L-seryl-tRNA(Sec) from L-serine and tRNA(Sec): step 1/1. Functionally, catalyzes the attachment of serine to tRNA(Ser). Is also able to aminoacylate tRNA(Sec) with serine, to form the misacylated tRNA L-seryl-tRNA(Sec), which will be further converted into selenocysteinyl-tRNA(Sec). The sequence is that of Serine--tRNA ligase from Bacillus cereus (strain B4264).